The sequence spans 391 residues: Na(+)/H(+) antiporter NhaA (391 aa).

A run of 12 helical transmembrane segments spans residues 9 to 29 (FQLEAASGLLLIAAAVLALII), 36 to 56 (YLYSGLLDVPVAVQIGALNIA), 59 to 79 (LLLWINDGLMALFFLLIGLEV), 95 to 115 (ILPATAAVGGMVVPALIYWFI), 123 to 143 (VAGWAIPTATDIAFALGVLAL), 154 to 174 (LFLMTLAIIDDLGAIIVIALF), 177 to 197 (GTLSSVSLLLAAACLVVLIAM), 213 to 235 (LILWVCVLKSGVHATLAGVALAL), 259 to 279 (WVAYAILPLFAFANAGVSLAG), 293 to 313 (IAVGLLLGKTVGVFGLTWLAV), 329 to 349 (ILGVAILCGIGFTMSLFVGSL), and 364 to 384 (MGILTGSFFAAVIGYAVTAMA).

It belongs to the NhaA Na(+)/H(+) (TC 2.A.33) antiporter family.

Its subcellular location is the cell inner membrane. It carries out the reaction Na(+)(in) + 2 H(+)(out) = Na(+)(out) + 2 H(+)(in). In terms of biological role, na(+)/H(+) antiporter that extrudes sodium in exchange for external protons. The chain is Na(+)/H(+) antiporter NhaA from Pseudomonas putida (strain GB-1).